Here is a 511-residue protein sequence, read N- to C-terminus: GMP synthase [glutamine-hydrolyzing] (511 aa).

The Glutamine amidotransferase type-1 domain occupies 5–195 (DILVLDFGSQ…AKYACNCESV (191 aa)). The active-site Nucleophile is Cys82. Residues His169 and Glu171 contribute to the active site. The GMPS ATP-PPase domain occupies 196–386 (WNMGSFAKTQ…LGLSKEVVYR (191 aa)). Position 223–229 (223–229 (SGGVDSS)) interacts with ATP.

In terms of assembly, homodimer.

It carries out the reaction XMP + L-glutamine + ATP + H2O = GMP + L-glutamate + AMP + diphosphate + 2 H(+). Its pathway is purine metabolism; GMP biosynthesis; GMP from XMP (L-Gln route): step 1/1. Its function is as follows. Catalyzes the synthesis of GMP from XMP. The chain is GMP synthase [glutamine-hydrolyzing] from Campylobacter jejuni (strain RM1221).